The primary structure comprises 100 residues: Spleen trypsin inhibitor I (100 aa).

The first 21 residues, 1–21 (MKMSRLCLSIALLVLLGTLAA), serve as a signal peptide directing secretion. The propeptide occupies 22–33 (STPGCDTSNQAK). Residues 40 to 90 (CLEPPYTGPCKAKMIRYFYNAKAGFCETFVYGGCKAKSNNFRSAEDCMRTC) enclose the BPTI/Kunitz inhibitor domain. 3 disulfides stabilise this stretch: Cys40-Cys90, Cys49-Cys73, and Cys65-Cys86. Leu100 is a propeptide.

It localises to the secreted. This chain is Spleen trypsin inhibitor I, found in Bos taurus (Bovine).